Consider the following 280-residue polypeptide: Golgi phosphoprotein 3-like A (280 aa).

A disordered region spans residues 1 to 32; sequence MTTLIRRGRRAEEGQERRADSEDSIKDKDEEE. The span at 10-32 shows a compositional bias: basic and acidic residues; sequence RAEEGQERRADSEDSIKDKDEEE. W62, R71, R152, and R155 together coordinate a 1,2-diacyl-sn-glycero-3-phospho-(1D-myo-inositol 4-phosphate). The segment at 171 to 182 is beta-hairpin required for oligomerization; it reads EKQNFLLFDMTT.

Belongs to the GOLPH3/VPS74 family. As to quaternary structure, homooligomer.

Its subcellular location is the golgi apparatus. The protein resides in the golgi stack membrane. The protein localises to the trans-Golgi network membrane. Phosphatidylinositol-4-phosphate-binding protein that may play a role in the process of vesicle budding at the Golgi and anterograde transport to the plasma membrane. The protein is Golgi phosphoprotein 3-like A (golph3l-a) of Xenopus laevis (African clawed frog).